We begin with the raw amino-acid sequence, 128 residues long: Large ribosomal subunit protein uL22 (128 aa).

This sequence belongs to the universal ribosomal protein uL22 family. Part of the 50S ribosomal subunit.

Functionally, this protein binds specifically to 23S rRNA; its binding is stimulated by other ribosomal proteins, e.g. L4, L17, and L20. It is important during the early stages of 50S assembly. It makes multiple contacts with different domains of the 23S rRNA in the assembled 50S subunit and ribosome. Its function is as follows. The globular domain of the protein is located near the polypeptide exit tunnel on the outside of the subunit, while an extended beta-hairpin is found that lines the wall of the exit tunnel in the center of the 70S ribosome. The sequence is that of Large ribosomal subunit protein uL22 from Rhodopseudomonas palustris (strain BisB18).